The following is a 261-amino-acid chain: Small ribosomal subunit protein uS2 (261 aa).

Belongs to the universal ribosomal protein uS2 family.

In Thermodesulfovibrio yellowstonii (strain ATCC 51303 / DSM 11347 / YP87), this protein is Small ribosomal subunit protein uS2.